The following is a 67-amino-acid chain: Alpha-actitoxin-Ms11a-3 (67 aa).

A signal peptide spans 1–24; sequence MASKIFFVLAVFLVMSAVLPESFA. Intrachain disulfides connect Cys26-Cys41, Cys33-Cys46, and Cys40-Cys61. At Lys66 the chain carries Lysine amide.

The protein localises to the secreted. It localises to the nematocyst. Alpha-toxins act on postsynaptic membranes, they bind to the nicotinic acetylcholine receptors (nAChR) and thus inhibit them. This toxin shows inhibition against mouse alpha-1-beta-1-delta-epsilon (CHRNA1-CHRNB1-CHRND-CHRNE) (IC(50)=1215 nM), rat alpha-3-beta-4/CHRNA3-CHRNB4 (IC(50)=5.173 uM), rat alpha-7/CHRNA7 (IC(50)=4.786 uM), human alpha-7/CHRNA7 (IC(50)=8.869 uM), and rat alpha-9-alpha-10/CHRNA9-CHRNA10 (IC(50)=202 nM). Also competes with alpha-bungarotoxin for binding to orthosteric sites on muscle-type T.carlifornicus (IC(50)=256 nM) and human alpha-7/CHRNA7 nAChRs (IC(50)=19.81 uM). In Metridium senile (Brown sea anemone), this protein is Alpha-actitoxin-Ms11a-3.